Reading from the N-terminus, the 191-residue chain is Large ribosomal subunit protein bL9c (191 aa).

The N-terminal 35 residues, 1–35 (MASPSCASTLPWTAAAFSYPRRLQTRRAPSLVIVA), are a transit peptide targeting the chloroplast.

It belongs to the bacterial ribosomal protein bL9 family. Part of the 50S ribosomal subunit.

It localises to the plastid. The protein localises to the chloroplast. In terms of biological role, binds to the 23S rRNA. This is Large ribosomal subunit protein bL9c (RPL9) from Triticum aestivum (Wheat).